A 438-amino-acid chain; its full sequence is Phospholipase D Y (438 aa).

The N-terminal stretch at 1–19 (MIINRLFIIIVLFFVNVNS) is a signal peptide. Residue Asn-50 is glycosylated (N-linked (GlcNAc...) asparagine). One can recognise a PLD phosphodiesterase 1 domain in the interval 145–172 (GSGVLHTKLIIIDESSAYVGSANADWSS). Active-site residues include His-150, Lys-152, and Asp-157. Asn-223, Asn-336, and Asn-394 each carry an N-linked (GlcNAc...) asparagine glycan. In terms of domain architecture, PLD phosphodiesterase 2 spans 373 to 399 (YTRVNHAKFMVTEKQSYVGTSNWSQDY).

This sequence belongs to the phospholipase D family.

The catalysed reaction is a 1,2-diacyl-sn-glycero-3-phosphocholine + H2O = a 1,2-diacyl-sn-glycero-3-phosphate + choline + H(+). Inhibited by butan-1-ol. Functionally, hydrolyzes membrane phospholipids, such as PtdCho (phosphatidylcholine), producing the free headgroup and PtdOH (phosphatidic acid; signaling molecule on its own). The protein is Phospholipase D Y (pldY) of Dictyostelium discoideum (Social amoeba).